The primary structure comprises 355 residues: Glutamyl aminopeptidase (355 aa).

A divalent metal cation-binding residues include H65 and D181. Catalysis depends on E213, which acts as the Proton acceptor. A divalent metal cation-binding residues include E214, D236, and H319.

Belongs to the peptidase M42 family. It depends on a divalent metal cation as a cofactor.

It catalyses the reaction Release of N-terminal glutamate (and to a lesser extent aspartate) from a peptide.. The polypeptide is Glutamyl aminopeptidase (pepA) (Lactococcus lactis subsp. cremoris (strain MG1363)).